A 48-amino-acid chain; its full sequence is MSYTRVDHPTGKMACHLRQILASPLFFANYVLHAAIHYPSSDIRGDIL.

The helical transmembrane segment at 20-37 (ILASPLFFANYVLHAAIH) threads the bilayer.

It localises to the membrane. This is an uncharacterized protein from Saccharomyces cerevisiae (strain ATCC 204508 / S288c) (Baker's yeast).